Consider the following 392-residue polypeptide: ER-bound oxygenase mpaB (392 aa).

Residues 1 to 21 (MSLPLPPALSELARALPYSRT) lie on the Lumenal side of the membrane. Residues 22–41 (QWLPIFVGFLIGYPILIRAL) traverse the membrane as a helical segment. Residues 42 to 392 (RYKRHGEMKK…WSKYHATTND (351 aa)) are Cytoplasmic-facing. A disordered region spans residues 352 to 376 (DLGQKKGPQGDPGNDEGIKDLKDGE). Positions 367–376 (EGIKDLKDGE) are enriched in basic and acidic residues.

It belongs to the mpaB oxygenase family.

The protein resides in the endoplasmic reticulum membrane. It carries out the reaction 4-farnesyl-3,5-dihydroxy-6-methylphthalide + AH2 + 2 O2 = (4E,8E)-10-(4,6-dihydroxy-7-methyl-3-oxo-1,3-dihydro-2-benzofuran-5-yl)-4,8-dimethyldeca-4,8-dienoate + acetone + A + H2O + H(+). It participates in secondary metabolite biosynthesis; terpenoid biosynthesis. In terms of biological role, ER-bound oxygenase; part of the gene cluster that mediates the biosynthesis of mycophenolic acid (MPA), the first isolated antibiotic natural product in the world obtained from a culture of Penicillium brevicompactum in 1893. MpaB catalyzes the oxidative cleavage the C19-C20 double bond in farnesyl-DHMP (FDHMP) to yield FDHMP-3C via a mycophenolic aldehyde intermediate. The first step of the pathway is the synthesis of 5-methylorsellinic acid (5MOA) by the cytosolic polyketide synthase mpaC. 5MOA is then converted to the phthalide compound 5,7-dihydroxy-4,6-dimethylphthalide (DHMP) by the endoplasmic reticulum-bound cytochrome P450 monooxygenase mpaDE. MpaDE first catalyzes hydroxylation of 5-MOA to 4,6-dihydroxy-2-(hydroxymethyl)-3-methylbenzoic acid (DHMB). MpaDE then acts as a lactone synthase that catalyzes the ring closure to convert DHMB into DHMP. The next step is the prenylation of DHMP by the Golgi apparatus-associated prenyltransferase mpaA to yield farnesyl-DHMP (FDHMP). The ER-bound oxygenase mpaB then mediates the oxidative cleavage the C19-C20 double bond in FDHMP to yield FDHMP-3C via a mycophenolic aldehyde intermediate. The O-methyltransferase mpaG catalyzes the methylation of FDHMP-3C to yield MFDHMP-3C. After the cytosolic methylation of FDHMP-3C, MFDHMP-3C enters into peroxisomes probably via free diffusion due to its low molecular weight. Upon a peroxisomal CoA ligation reaction, catalyzed by a beta-oxidation component enzyme acyl-CoA ligase ACL891, MFDHMP-3C-CoA would then be restricted to peroxisomes for the following beta-oxidation pathway steps. The peroxisomal beta-oxidation machinery than converts MFDHMP-3C-CoA into MPA_CoA, via a beta-oxidation chain-shortening process. Finally mpaH acts as a peroxisomal acyl-CoA hydrolase with high substrate specificity toward MPA-CoA to release the final product MPA. The protein is ER-bound oxygenase mpaB of Penicillium brevicompactum.